The chain runs to 294 residues: Ethylene-inducing xylanase 3 (294 aa).

The first 19 residues, 1 to 19, serve as a signal peptide directing secretion; it reads MVCFSSLFVAASAIAGVFA. One can recognise a GH11 domain in the interval 31–226; that stretch reads QSTPSSQGTH…SSGSARINVA (196 aa). Residue E122 is the Nucleophile of the active site. E213 acts as the Proton donor in catalysis. The CBM1 domain occupies 259–294; the sequence is SCAARWGQCGGSGWNGATCCSAGTCQAQNQWYSQCL.

Belongs to the glycosyl hydrolase 11 (cellulase G) family.

The catalysed reaction is Endohydrolysis of (1-&gt;4)-beta-D-xylosidic linkages in xylans.. Its pathway is glycan degradation; xylan degradation. Functionally, endo-1,4-beta-xylanase involved in the hydrolysis of xylan, a major structural heterogeneous polysaccharide found in plant biomass representing the second most abundant polysaccharide in the biosphere, after cellulose. Exhibits immunity-inducing activity in Nicotiana benthamiana. Can induce strong oxidative burst, activate the expression of defense-related genes, and increase resistance against oomycete and fungal pathogens in N.benthamiana. In Verticillium dahliae (strain VdLs.17 / ATCC MYA-4575 / FGSC 10137) (Verticillium wilt), this protein is Ethylene-inducing xylanase 3.